Here is a 180-residue protein sequence, read N- to C-terminus: Pro-glucagon (180 aa).

Residues 1–20 (MKSIYFVAGLFVMLVQGSWQ) form the signal peptide. The segment at 26-56 (TEEKSRSFSAPQTEPLNDLDQMNEDKRHSQG) is disordered. Ser54 carries the phosphoserine modification. Residues 84-89 (NKNNIA) constitute a propeptide that is removed on maturation. Residues Ser105 and Ser108 each carry the phosphoserine modification. Arg127 is subject to Arginine amide. A propeptide spanning residues 131-145 (DFPEEVAIVEEFRRR) is cleaved from the precursor. Ser150 and Ser152 each carry phosphoserine.

The protein belongs to the glucagon family. In terms of processing, proglucagon is post-translationally processed in a tissue-specific manner in pancreatic A cells and intestinal L cells. In pancreatic A cells, the major bioactive hormone is glucagon cleaved by PCSK2/PC2. In the intestinal L cells PCSK1/PC1 liberates GLP-1, GLP-2, glicentin and oxyntomodulin. GLP-1 is further N-terminally truncated by post-translational processing in the intestinal L cells resulting in GLP-1(7-37) GLP-1-(7-36)amide. The C-terminal amidation is neither important for the metabolism of GLP-1 nor for its effects on the endocrine pancreas. In terms of tissue distribution, glucagon is secreted in the A cells of the islets of Langerhans. GLP-1, GLP-2, oxyntomodulin and glicentin are secreted from enteroendocrine cells throughout the gastrointestinal tract. GLP-1 and GLP-2 are also secreted in selected neurons in the brain.

It localises to the secreted. In terms of biological role, plays a key role in glucose metabolism and homeostasis. Regulates blood glucose by increasing gluconeogenesis and decreasing glycolysis. A counterregulatory hormone of insulin, raises plasma glucose levels in response to insulin-induced hypoglycemia. Plays an important role in initiating and maintaining hyperglycemic conditions in diabetes. Potent stimulator of glucose-dependent insulin release. Also stimulates insulin release in response to IL6. Plays important roles on gastric motility and the suppression of plasma glucagon levels. May be involved in the suppression of satiety and stimulation of glucose disposal in peripheral tissues, independent of the actions of insulin. Has growth-promoting activities on intestinal epithelium. May also regulate the hypothalamic pituitary axis (HPA) via effects on LH, TSH, CRH, oxytocin, and vasopressin secretion. Increases islet mass through stimulation of islet neogenesis and pancreatic beta cell proliferation. Inhibits beta cell apoptosis. Functionally, stimulates intestinal growth and up-regulates villus height in the small intestine, concomitant with increased crypt cell proliferation and decreased enterocyte apoptosis. The gastrointestinal tract, from the stomach to the colon is the principal target for GLP-2 action. Plays a key role in nutrient homeostasis, enhancing nutrient assimilation through enhanced gastrointestinal function, as well as increasing nutrient disposal. Stimulates intestinal glucose transport and decreases mucosal permeability. Its function is as follows. Significantly reduces food intake. Inhibits gastric emptying in humans. Suppression of gastric emptying may lead to increased gastric distension, which may contribute to satiety by causing a sensation of fullness. In terms of biological role, may modulate gastric acid secretion and the gastro-pyloro-duodenal activity. May play an important role in intestinal mucosal growth in the early period of life. This is Pro-glucagon (GCG) from Canis lupus familiaris (Dog).